A 481-amino-acid polypeptide reads, in one-letter code: 3-isopropylmalate dehydratase large subunit (481 aa).

Residues Cys363, Cys423, and Cys426 each contribute to the [4Fe-4S] cluster site. Residues Asp432 to His459 form a disordered region.

The protein belongs to the aconitase/IPM isomerase family. LeuC type 1 subfamily. Heterodimer of LeuC and LeuD. The cofactor is [4Fe-4S] cluster.

It carries out the reaction (2R,3S)-3-isopropylmalate = (2S)-2-isopropylmalate. It participates in amino-acid biosynthesis; L-leucine biosynthesis; L-leucine from 3-methyl-2-oxobutanoate: step 2/4. Functionally, catalyzes the isomerization between 2-isopropylmalate and 3-isopropylmalate, via the formation of 2-isopropylmaleate. This Corynebacterium glutamicum (strain R) protein is 3-isopropylmalate dehydratase large subunit.